A 323-amino-acid chain; its full sequence is Beta-ketoacyl-[acyl-carrier-protein] synthase III (323 aa).

Catalysis depends on residues Cys113 and His250. Residues 251–255 form an ACP-binding region; it reads QANRR. Asn280 is an active-site residue.

It belongs to the thiolase-like superfamily. FabH family. Homodimer.

It localises to the cytoplasm. The catalysed reaction is malonyl-[ACP] + acetyl-CoA + H(+) = 3-oxobutanoyl-[ACP] + CO2 + CoA. It participates in lipid metabolism; fatty acid biosynthesis. Functionally, catalyzes the condensation reaction of fatty acid synthesis by the addition to an acyl acceptor of two carbons from malonyl-ACP. Catalyzes the first condensation reaction which initiates fatty acid synthesis and may therefore play a role in governing the total rate of fatty acid production. Possesses both acetoacetyl-ACP synthase and acetyl transacylase activities. Its substrate specificity determines the biosynthesis of branched-chain and/or straight-chain of fatty acids. The polypeptide is Beta-ketoacyl-[acyl-carrier-protein] synthase III (Rhizobium meliloti (strain 1021) (Ensifer meliloti)).